The sequence spans 279 residues: 3-methyl-2-oxobutanoate hydroxymethyltransferase (279 aa).

Residues Asp43 and Asp82 each contribute to the Mg(2+) site. 3-methyl-2-oxobutanoate contacts are provided by residues Asp43–Ser44, Asp82, and Lys112. Glu114 is a Mg(2+) binding site. Glu181 acts as the Proton acceptor in catalysis.

This sequence belongs to the PanB family. In terms of assembly, homodecamer; pentamer of dimers. Mg(2+) is required as a cofactor.

The protein resides in the cytoplasm. The enzyme catalyses 3-methyl-2-oxobutanoate + (6R)-5,10-methylene-5,6,7,8-tetrahydrofolate + H2O = 2-dehydropantoate + (6S)-5,6,7,8-tetrahydrofolate. It functions in the pathway cofactor biosynthesis; (R)-pantothenate biosynthesis; (R)-pantoate from 3-methyl-2-oxobutanoate: step 1/2. In terms of biological role, catalyzes the reversible reaction in which hydroxymethyl group from 5,10-methylenetetrahydrofolate is transferred onto alpha-ketoisovalerate to form ketopantoate. The polypeptide is 3-methyl-2-oxobutanoate hydroxymethyltransferase (Shouchella clausii (strain KSM-K16) (Alkalihalobacillus clausii)).